A 1711-amino-acid polypeptide reads, in one-letter code: Serine/threonine-protein kinase MRCK beta (1711 aa).

The region spanning 76–342 is the Protein kinase domain; sequence FEIIKVIGRG…IEDFKKHAFF (267 aa). ATP is bound by residues 82–90 and Lys105; that span reads IGRGAFGEV. Asp200 (proton acceptor) is an active-site residue. Phosphoserine; by autocatalysis is present on residues Ser221 and Ser233. A Phosphothreonine; by autocatalysis modification is found at Thr239. The AGC-kinase C-terminal domain occupies 343-413; it reads EGLNWENIRN…TTESCFSDRG (71 aa). Position 423 is a phosphothreonine (Thr423). Coiled-coil stretches lie at residues 431 to 815 and 878 to 939; these read QRDL…AHWE and ELQS…FRAD. The interval 461-484 is disordered; that stretch reads LQESTQTVQSLHGSSRALSNSNRD. Positions 463–481 are enriched in polar residues; it reads ESTQTVQSLHGSSRALSNS. Arg671 is subject to Omega-N-methylarginine. The residue at position 954 (Tyr954) is a Phosphotyrosine. The segment at 969-1009 is disordered; that stretch reads SSASEQETQAPKPEASPSMSVAASEQQEDMARPPQRPSAVP. The Phorbol-ester/DAG-type zinc finger occupies 1025–1075; that stretch reads AHQFSIKSFSSPTQCSHCTSLMVGLIRQGYACEVCSFACHVSCKDGAPQVC. In terms of domain architecture, PH spans 1095-1214; it reads GTAYKGHVKV…WVGILEGLQS (120 aa). The region spanning 1240-1513 is the CNH domain; that stretch reads IKAILTAAIV…RPLNSEGTLN (274 aa). One can recognise a CRIB domain in the interval 1583-1596; sequence ISNPTNFNHVAHMG. The interval 1611 to 1711 is disordered; that stretch reads AVPPSQEERP…EGLEQPACDT (101 aa). Polar residues predominate over residues 1641-1650; the sequence is WPSSGGSEPS. Positions 1664–1675 are enriched in basic and acidic residues; it reads DFDKEPDSDSTK. Residues Ser1680, Ser1682, Ser1686, Ser1690, and Ser1693 each carry the phosphoserine modification.

It belongs to the protein kinase superfamily. AGC Ser/Thr protein kinase family. DMPK subfamily. As to quaternary structure, homodimer and homotetramer via the coiled coil regions. Interacts tightly with GTP-bound but not GDP-bound CDC42. Interacts with TJP1, when in the presence of catalytically active CDC42. Forms a tripartite complex with MYO18A and LURAP1 with the latter acting as an adapter connecting CDC42BPB and MYO18A. LURAP1 binding results in activation of CDC42BPB by abolition of its negative autoregulation. Interacts with STRIP1, STRN3 and SIKE1. Interacts with CPNE4 (via VWFA domain). Interacts with LURAP1. Interacts (via AGC-kinase C-terminal domain) with FAM89B/LRAP25 (via LRR repeat). Forms a tripartite complex with FAM89B/LRAP25 and LIMK1. The cofactor is Mg(2+). Post-translationally, proteolytically cleaved by caspases upon apoptosis induction. In terms of tissue distribution, expressed in all tissues examined, with high levels in heart, brain, placenta and lung.

It is found in the cytoplasm. The protein localises to the cell membrane. Its subcellular location is the cell junction. It localises to the cell projection. The protein resides in the lamellipodium. The catalysed reaction is L-seryl-[protein] + ATP = O-phospho-L-seryl-[protein] + ADP + H(+). The enzyme catalyses L-threonyl-[protein] + ATP = O-phospho-L-threonyl-[protein] + ADP + H(+). Maintained in an inactive, closed conformation by an interaction between the kinase domain and the negative autoregulatory C-terminal coiled-coil region. Agonist binding to the phorbol ester binding site disrupts this, releasing the kinase domain to allow N-terminus-mediated dimerization and kinase activation by transautophosphorylation. Inhibited by chelerythrine chloride. Its function is as follows. Serine/threonine-protein kinase which is an important downstream effector of CDC42 and plays a role in the regulation of cytoskeleton reorganization and cell migration. Regulates actin cytoskeletal reorganization via phosphorylation of PPP1R12C and MYL9/MLC2. In concert with MYO18A and LURAP1, is involved in modulating lamellar actomyosin retrograde flow that is crucial to cell protrusion and migration. Phosphorylates PPP1R12A. In concert with FAM89B/LRAP25 mediates the targeting of LIMK1 to the lamellipodium resulting in its activation and subsequent phosphorylation of CFL1 which is important for lamellipodial F-actin regulation. The chain is Serine/threonine-protein kinase MRCK beta from Homo sapiens (Human).